We begin with the raw amino-acid sequence, 443 residues long: Glutamyl-tRNA reductase (443 aa).

Substrate contacts are provided by residues 49 to 52, serine 109, 114 to 116, and glutamine 120; these read TCNR and ETQ. The active-site Nucleophile is cysteine 50. An NADP(+)-binding site is contributed by 189–194; the sequence is GAGKMS.

It belongs to the glutamyl-tRNA reductase family. As to quaternary structure, homodimer.

The catalysed reaction is (S)-4-amino-5-oxopentanoate + tRNA(Glu) + NADP(+) = L-glutamyl-tRNA(Glu) + NADPH + H(+). The protein operates within porphyrin-containing compound metabolism; protoporphyrin-IX biosynthesis; 5-aminolevulinate from L-glutamyl-tRNA(Glu): step 1/2. Catalyzes the NADPH-dependent reduction of glutamyl-tRNA(Glu) to glutamate 1-semialdehyde (GSA). The sequence is that of Glutamyl-tRNA reductase from Heliobacterium mobile (Heliobacillus mobilis).